The following is a 382-amino-acid chain: Tuliposide A-converting enzyme 2, chloroplastic (382 aa).

The transit peptide at 1 to 74 (MSVASFFSSL…PSPSLSPTPT (74 aa)) directs the protein to the chloroplast. Catalysis depends on Ser-232, which acts as the Acyl-ester intermediate. Catalysis depends on charge relay system residues Asp-324 and His-356.

It belongs to the AB hydrolase superfamily. Homodimer. As to expression, expressed in roots, stems, leaves, petals, stamens and pistils, but not in bulb scales.

The protein resides in the plastid. It localises to the chloroplast. It carries out the reaction 6-tuliposide A = tulipalin A + D-glucose. With respect to regulation, inhibited by NaF, AgNO(3), HgCl(2), CuSO(4) and phenylmethylsulfonyl fluoride (PMSF). Functionally, lactone-forming carboxylesterases, specifically catalyzing intramolecular transesterification, but not hydrolysis. Involved in the biosynthesis of tulipalins, defensive chemicals that show antimicrobial activities against a broad range of strains of bacteria and fungi. Substrates are 6-tuliposide A &gt; 6-tuliposide B. The protein is Tuliposide A-converting enzyme 2, chloroplastic (TCEA2) of Tulipa gesneriana (Garden tulip).